The chain runs to 160 residues: Transcription antitermination protein NusB (160 aa).

This sequence belongs to the NusB family.

In terms of biological role, involved in transcription antitermination. Required for transcription of ribosomal RNA (rRNA) genes. Binds specifically to the boxA antiterminator sequence of the ribosomal RNA (rrn) operons. The polypeptide is Transcription antitermination protein NusB (Sinorhizobium medicae (strain WSM419) (Ensifer medicae)).